Reading from the N-terminus, the 640-residue chain is 1,4-alpha-glucan branching enzyme GlgB (640 aa).

Catalysis depends on aspartate 318, which acts as the Nucleophile. Glutamate 371 functions as the Proton donor in the catalytic mechanism.

Belongs to the glycosyl hydrolase 13 family. GlgB subfamily. In terms of assembly, monomer.

The catalysed reaction is Transfers a segment of a (1-&gt;4)-alpha-D-glucan chain to a primary hydroxy group in a similar glucan chain.. Its pathway is glycan biosynthesis; glycogen biosynthesis. Catalyzes the formation of the alpha-1,6-glucosidic linkages in glycogen by scission of a 1,4-alpha-linked oligosaccharide from growing alpha-1,4-glucan chains and the subsequent attachment of the oligosaccharide to the alpha-1,6 position. The sequence is that of 1,4-alpha-glucan branching enzyme GlgB from Francisella tularensis subsp. holarctica (strain FTNF002-00 / FTA).